A 483-amino-acid chain; its full sequence is UDP-N-acetylmuramyl-tripeptide synthetase (483 aa).

A UDP-N-acetyl-alpha-D-muramoyl-L-alanyl-D-glutamate-binding site is contributed by S43. ATP is bound at residue 116-122 (GTKGKTT). UDP-N-acetyl-alpha-D-muramoyl-L-alanyl-D-glutamate-binding positions include 160–161 (TT), S187, and R195. N6-carboxylysine is present on K229.

Belongs to the MurCDEF family. MurE subfamily. In terms of processing, carboxylation is probably crucial for Mg(2+) binding and, consequently, for the gamma-phosphate positioning of ATP.

It localises to the cytoplasm. It functions in the pathway cell wall biogenesis; peptidoglycan biosynthesis. Catalyzes the addition of an amino acid to the nucleotide precursor UDP-N-acetylmuramoyl-L-alanyl-D-glutamate (UMAG) in the biosynthesis of bacterial cell-wall peptidoglycan. This chain is UDP-N-acetylmuramyl-tripeptide synthetase, found in Lactococcus lactis subsp. cremoris (strain MG1363).